A 260-amino-acid chain; its full sequence is Cytosolic Fe-S cluster assembly factor Nubp2 homolog (260 aa).

14–21 lines the ATP pocket; it reads GKGGVGKS. Residues Cys188 and Cys191 each coordinate [4Fe-4S] cluster.

It belongs to the Mrp/NBP35 ATP-binding proteins family. NUBP2/CFD1 subfamily. Heterotetramer of 2 Nubp1 and 2 Nubp2 chains. [4Fe-4S] cluster is required as a cofactor.

The protein resides in the cytoplasm. In terms of biological role, component of the cytosolic iron-sulfur (Fe/S) protein assembly (CIA) machinery. Required for maturation of extramitochondrial Fe-S proteins. The Nubp1-Nubp2 heterotetramer forms a Fe-S scaffold complex, mediating the de novo assembly of an Fe-S cluster and its transfer to target apoproteins. In Drosophila melanogaster (Fruit fly), this protein is Cytosolic Fe-S cluster assembly factor Nubp2 homolog.